The sequence spans 619 residues: Chaperone protein HscA homolog (619 aa).

It belongs to the heat shock protein 70 family.

Functionally, chaperone involved in the maturation of iron-sulfur cluster-containing proteins. Has a low intrinsic ATPase activity which is markedly stimulated by HscB. This chain is Chaperone protein HscA homolog, found in Azotobacter vinelandii.